The following is a 418-amino-acid chain: Inward rectifier potassium channel 16 (418 aa).

Residues 1-67 (MSYYGSSYHI…VVDIFTTLVD (67 aa)) are Cytoplasmic-facing. The chain crosses the membrane as a helical span at residues 68–94 (TKWRHMFVIFSLSYILSWLIFGSVFWL). The Extracellular segment spans residues 95–117 (IAFHHGDLLNDPDITPCVDNVHS). Positions 118–134 (FTGAFLFSLETQTTIGY) form an intramembrane region, helical; Pore-forming. The Selectivity filter signature appears at 131–136 (TIGYGY). The Extracellular portion of the chain corresponds to 135–143 (GYRCVTEEC). A helical transmembrane segment spans residues 144–171 (SVAVLMVILQSILSCIINTFIIGAALAK). Residues 172 to 418 (MATARKRAQT…LNRISVESQM (247 aa)) lie on the Cytoplasmic side of the membrane. 2 positions are modified to phosphoserine: Ser373 and Ser375.

The protein belongs to the inward rectifier-type potassium channel (TC 1.A.2.1) family. KCNJ16 subfamily. As to quaternary structure, it forms heteromeric channels with Kir4.1/KCNJ10; this interaction is required for KCNJ16 localization to the basolateral membrane in kidney cells. As a heteromer with KCNJ10, may interact with MAGI1; this interaction may facilitate KCNJ10/KCNJ16 potassium channel expression at the basolateral membrane in kidney cells. May form heteromers with Kir2.1/KCNJ2. Can form heteromeric channels with Kir4.2/KCNJ15. Widely expressed, with highest levels in adult and fetal kidney (at protein level). In the kidney, expressed in the proximal and distal convoluted tubules, but not in glomeruli nor collecting ducts.

It is found in the membrane. The protein resides in the basolateral cell membrane. It carries out the reaction K(+)(in) = K(+)(out). With respect to regulation, channel activity is strongly regulated by variations of cytosolic pH; channels are activated by alkaline and inhibited by acidic pH values. Activated by phosphatidylinositol 4,5 biphosphate (PtdIns(4,5)P2). In terms of biological role, inward rectifier potassium channels are characterized by a greater tendency to allow potassium to flow into the cell rather than out of it. Their voltage dependence is regulated by the concentration of extracellular potassium; as external potassium is raised, the voltage range of the channel opening shifts to more positive voltages. The inward rectification is mainly due to the blockage of outward current by internal magnesium. KCNJ16 may be involved in the regulation of fluid and pH balance. In the kidney, together with KCNJ10, mediates basolateral K(+) recycling in distal tubules; this process is critical for Na(+) reabsorption at the tubules. The chain is Inward rectifier potassium channel 16 (KCNJ16) from Homo sapiens (Human).